The following is a 158-amino-acid chain: Placenta growth factor (158 aa).

The segment at residues 1–23 (MLAMKLFTCFLQVLAGLAVHSQG) is a signal peptide (or 26). Residues Asn-29 and Asn-30 are each glycosylated (N-linked (GlcNAc...) asparagine). 3 disulfides stabilise this stretch: Cys-48/Cys-90, Cys-79/Cys-125, and Cys-83/Cys-127. Asn-97 carries an N-linked (GlcNAc...) asparagine glycan. The disordered stretch occupies residues 136 to 158 (AERRKTKGKRKQSKTPQTEEPHL). Over residues 137–148 (ERRKTKGKRKQS) the composition is skewed to basic residues.

It belongs to the PDGF/VEGF growth factor family. Antiparallel homodimer; disulfide-linked. Also found as heterodimer with VEGFA/VEGF.

Its subcellular location is the secreted. In terms of biological role, growth factor active in angiogenesis and endothelial cell growth, stimulating their proliferation and migration. It binds to the receptor FLT1/VEGFR-1. Also promotes cell tumor growth. The chain is Placenta growth factor (Pgf) from Rattus norvegicus (Rat).